The chain runs to 118 residues: Ribosome-binding factor A (118 aa).

This sequence belongs to the RbfA family. As to quaternary structure, monomer. Binds 30S ribosomal subunits, but not 50S ribosomal subunits or 70S ribosomes.

It localises to the cytoplasm. In terms of biological role, one of several proteins that assist in the late maturation steps of the functional core of the 30S ribosomal subunit. Associates with free 30S ribosomal subunits (but not with 30S subunits that are part of 70S ribosomes or polysomes). Required for efficient processing of 16S rRNA. May interact with the 5'-terminal helix region of 16S rRNA. This is Ribosome-binding factor A from Latilactobacillus sakei subsp. sakei (strain 23K) (Lactobacillus sakei subsp. sakei).